The chain runs to 251 residues: Probable transcriptional regulatory protein MRA_2631 (251 aa).

The protein belongs to the TACO1 family.

It localises to the cytoplasm. This chain is Probable transcriptional regulatory protein MRA_2631, found in Mycobacterium tuberculosis (strain ATCC 25177 / H37Ra).